The sequence spans 196 residues: Protein LSM12 homolog A (196 aa).

The region spanning Ala-3–Arg-73 is the Sm domain. An AD domain is found at Ala-81–Glu-175. Residues Val-174–Ser-196 are disordered. Polar residues predominate over residues Gln-177–Ser-196.

The protein belongs to the LSM12 family.

In Danio rerio (Zebrafish), this protein is Protein LSM12 homolog A (lsm12a).